Consider the following 340-residue polypeptide: 4-hydroxy-2-oxovalerate aldolase (340 aa).

Residues 4 to 255 (VVIHDPTLRD…ATGIDLYALL (252 aa)) enclose the Pyruvate carboxyltransferase domain. Position 12-13 (12-13 (RD)) interacts with substrate. Asp-13 serves as a coordination point for Mn(2+). Residue His-16 is the Proton acceptor of the active site. Positions 166 and 194 each coordinate substrate. Residues His-194 and His-196 each contribute to the Mn(2+) site.

This sequence belongs to the 4-hydroxy-2-oxovalerate aldolase family.

The catalysed reaction is (S)-4-hydroxy-2-oxopentanoate = acetaldehyde + pyruvate. The polypeptide is 4-hydroxy-2-oxovalerate aldolase (Streptomyces griseus subsp. griseus (strain JCM 4626 / CBS 651.72 / NBRC 13350 / KCC S-0626 / ISP 5235)).